A 351-amino-acid polypeptide reads, in one-letter code: MIENLVREEIKGFKNYEVHSIPYRYKMDANETPFELPEEVIKNIQEIVKSSQVNVYPDPTAEKLKEELARYCGVVPTNIFVGNGSDEIIHLIMLAFINKGDVVAYPHPSFAMYSVYSKIAGAVEIPVRLREDYNYDVDSFIKVIEKYQPKLVFLCNPNNPTGSVIEREDIIKIIQKSNGIVVVDEAYFEFYGNTIVDAINEFENLIVLRTLSKAFGLAGLRVGYAVANENILKYLNLVKSPYNINSLSQIIALKVLRTDVLKERINYILEERKRLIKELGKIPGVKVYPSKTNFILVKFKDADYVYQGLLERGILVRDFSKVEGLEGALRITVSSCEANDYLINGLKELLL.

An N6-(pyridoxal phosphate)lysine modification is found at K213.

It belongs to the class-II pyridoxal-phosphate-dependent aminotransferase family. Histidinol-phosphate aminotransferase subfamily. Homodimer. Requires pyridoxal 5'-phosphate as cofactor.

The catalysed reaction is L-histidinol phosphate + 2-oxoglutarate = 3-(imidazol-4-yl)-2-oxopropyl phosphate + L-glutamate. The protein operates within amino-acid biosynthesis; L-histidine biosynthesis; L-histidine from 5-phospho-alpha-D-ribose 1-diphosphate: step 7/9. The chain is Histidinol-phosphate aminotransferase from Thermoanaerobacter sp. (strain X514).